The following is a 184-amino-acid chain: Photosystem I assembly protein Ycf4 (184 aa).

The next 2 membrane-spanning stretches (helical) occupy residues 22-42 and 57-77; these read FGWACILFLGSLGFLVVGASS and IVFFPQGIVMSFYGIAGLFIS.

Belongs to the Ycf4 family.

The protein localises to the plastid. It localises to the chloroplast thylakoid membrane. Functionally, seems to be required for the assembly of the photosystem I complex. In Acorus calamus (Sweet flag), this protein is Photosystem I assembly protein Ycf4.